Consider the following 246-residue polypeptide: V-type proton ATPase subunit D (246 aa).

The protein belongs to the V-ATPase D subunit family. V-ATPase is a heteromultimeric enzyme made up of two complexes: the ATP-hydrolytic V1 complex and the proton translocation V0 complex. The V1 complex consists of three catalytic AB heterodimers that form a heterohexamer, three peripheral stalks each consisting of EG heterodimers, one central rotor including subunits D and F, and the regulatory subunits C and H. The proton translocation complex V0 consists of the proton transport subunit a, a ring of proteolipid subunits c9c'', rotary subunit d, subunits e and f, and the accessory subunits VhaAC45 and ATP6AP2.

Its function is as follows. Subunit of the V1 complex of vacuolar(H+)-ATPase (V-ATPase), a multisubunit enzyme composed of a peripheral complex (V1) that hydrolyzes ATP and a membrane integral complex (V0) that translocates protons. V-ATPase is responsible for acidifying and maintaining the pH of intracellular compartments and in some cell types, is targeted to the plasma membrane, where it is responsible for acidifying the extracellular environment. This chain is V-type proton ATPase subunit D, found in Manduca sexta (Tobacco hawkmoth).